Reading from the N-terminus, the 260-residue chain is Hydroxyethylthiazole kinase 1 (260 aa).

Methionine 39 is a substrate binding site. Positions 115 and 160 each coordinate ATP. Substrate is bound at residue glycine 187.

The protein belongs to the Thz kinase family. Mg(2+) is required as a cofactor.

It catalyses the reaction 5-(2-hydroxyethyl)-4-methylthiazole + ATP = 4-methyl-5-(2-phosphooxyethyl)-thiazole + ADP + H(+). The protein operates within cofactor biosynthesis; thiamine diphosphate biosynthesis; 4-methyl-5-(2-phosphoethyl)-thiazole from 5-(2-hydroxyethyl)-4-methylthiazole: step 1/1. In terms of biological role, catalyzes the phosphorylation of the hydroxyl group of 4-methyl-5-beta-hydroxyethylthiazole (THZ). In Streptococcus pneumoniae (strain P1031), this protein is Hydroxyethylthiazole kinase 1.